A 388-amino-acid polypeptide reads, in one-letter code: MDEYKIKTVEEGLTKIQFPEFDKISSDAPVFYNPHMELNRDISILALQTFQKQEDRNINICDLFGGSGIRGVRYKNEIDGVGHVFINDISETANEYERHNVELNNLKDIEIFQHDASMFLRMHRGEFDVIDIDPFGTPSPFLDSAGYCSRRNSLLCVTATDTSALCGTYKEPCIRKYNAKPYKSEYCHETGIRILAGFVALTLAKYSKSIEVKLSHSTEHYMRLYIEVKKGSKKSDECLKNIGYLSHCKHCLYREENKGLATSTPDICPECGEKLIQAGPLWLGEIQNEEFISKMIVESENKKLNTKEDVLKLLESCRIEAKSPATFYDVHKICKILKISAPKLDLVFGNLEKEGFEAVKTHFNPLGIKTNAPLKKIKEIIKTLSSSN.

Positions 7 to 381 constitute a Trm1 methyltransferase domain; the sequence is KTVEEGLTKI…APLKKIKEII (375 aa). S-adenosyl-L-methionine is bound by residues Arg40, Arg70, Asp88, Asp115, and Ala116. Zn(2+) is bound by residues Cys248, Cys251, Cys268, and Cys271.

This sequence belongs to the class I-like SAM-binding methyltransferase superfamily. Trm1 family.

The enzyme catalyses guanosine(26) in tRNA + 2 S-adenosyl-L-methionine = N(2)-dimethylguanosine(26) in tRNA + 2 S-adenosyl-L-homocysteine + 2 H(+). Its function is as follows. Dimethylates a single guanine residue at position 26 of a number of tRNAs using S-adenosyl-L-methionine as donor of the methyl groups. The chain is tRNA (guanine(26)-N(2))-dimethyltransferase from Methanobrevibacter smithii (strain ATCC 35061 / DSM 861 / OCM 144 / PS).